Consider the following 178-residue polypeptide: ATP-dependent protease subunit HslV (178 aa).

T7 is a catalytic residue. 3 residues coordinate Na(+): G162, C165, and T168.

This sequence belongs to the peptidase T1B family. HslV subfamily. As to quaternary structure, a double ring-shaped homohexamer of HslV is capped on each side by a ring-shaped HslU homohexamer. The assembly of the HslU/HslV complex is dependent on binding of ATP.

It is found in the cytoplasm. It carries out the reaction ATP-dependent cleavage of peptide bonds with broad specificity.. Allosterically activated by HslU binding. Protease subunit of a proteasome-like degradation complex believed to be a general protein degrading machinery. This chain is ATP-dependent protease subunit HslV, found in Burkholderia ambifaria (strain MC40-6).